The following is a 2407-amino-acid chain: Daf-12-interacting protein 1 (2407 aa).

Low complexity predominate over residues glutamine 90–alanine 112. Positions glutamine 90–arginine 152 are disordered. An RRM domain is found at cysteine 277–asparagine 335. 11 disordered regions span residues glutamate 439 to aspartate 632, alanine 737 to leucine 767, leucine 785 to alanine 849, proline 874 to valine 896, leucine 921 to alanine 986, arginine 993 to valine 1012, serine 1025 to glutamate 1844, isoleucine 1858 to histidine 1918, leucine 1932 to aspartate 1976, glutamate 2077 to alanine 2103, and serine 2172 to asparagine 2200. Over residues arginine 443–glycine 456 the composition is skewed to polar residues. A compositionally biased stretch (acidic residues) spans glutamate 512–valine 529. Composition is skewed to basic and acidic residues over residues serine 530 to lysine 541, glycine 548 to glutamate 564, and serine 573 to glutamate 586. Residues alanine 587–proline 603 show a composition bias toward polar residues. Residues serine 618–serine 627 are compositionally biased toward low complexity. Polar residues-rich tracts occupy residues threonine 791–serine 826 and serine 837–alanine 849. Residues alanine 924–glycine 946 are compositionally biased toward polar residues. The segment covering serine 966 to isoleucine 978 has biased composition (basic and acidic residues). Residues serine 1043–glutamine 1052 show a composition bias toward polar residues. Residues proline 1053 to histidine 1070 show a composition bias toward low complexity. Residues lysine 1086–lysine 1153 are compositionally biased toward basic and acidic residues. The segment covering serine 1165–aspartate 1177 has biased composition (acidic residues). Basic and acidic residues-rich tracts occupy residues leucine 1178–glutamine 1195, arginine 1218–glutamine 1227, alanine 1279–glutamate 1293, asparagine 1304–asparagine 1320, glutamine 1335–alanine 1355, and arginine 1376–aspartate 1398. Low complexity-rich tracts occupy residues proline 1456 to serine 1471 and threonine 1488 to serine 1498. Positions serine 1534 to glycine 1547 are enriched in polar residues. Residues serine 1570 to aspartate 1595 show a composition bias toward low complexity. Basic and acidic residues-rich tracts occupy residues serine 1679–serine 1691 and glutamate 1703–glutamine 1726. The segment covering threonine 1749–glutamine 1770 has biased composition (polar residues). Positions asparagine 1792–lysine 1805 are enriched in basic and acidic residues. The segment covering proline 1809–histidine 1826 has biased composition (polar residues). 2 stretches are compositionally biased toward basic and acidic residues: residues alanine 1827–glutamate 1836 and glutamate 1873–glutamate 1892. 2 stretches are compositionally biased toward polar residues: residues glutamate 1895–threonine 1911 and leucine 1932–glutamine 1942. Residues serine 1962–serine 1975 show a composition bias toward low complexity. The stretch at asparagine 2049–alanine 2110 forms a coiled coil. Over residues glutamate 2077–arginine 2099 the composition is skewed to basic and acidic residues. A compositionally biased stretch (low complexity) spans proline 2176–proline 2186. Positions glutamine 2213–asparagine 2383 constitute an SPOC domain.

Isoform d interacts with daf-12. As to expression, isoform d is widely expressed: detected in the hypodermis, seam cells, intestine, somatic gonad, neurons, vulval precursors, body wall muscle and pharynx.

The protein localises to the nucleus. Functionally, probable transcriptional corepressor which modulates activity of the nuclear hormone receptor daf-12 to regulate the dauer diapause. This Caenorhabditis elegans protein is Daf-12-interacting protein 1.